Here is a 227-residue protein sequence, read N- to C-terminus: Cytochrome c oxidase subunit 2 (227 aa).

The Mitochondrial intermembrane portion of the chain corresponds to 1-14; the sequence is MPYPLQLGLQDATS. The helical transmembrane segment at 15–45 threads the bilayer; that stretch reads PIMEELTHFHDHTLMIVFLISSLVLYIISSM. Residues 46–59 lie on the Mitochondrial matrix side of the membrane; sequence LTTKLTHTSTMDAQ. The chain crosses the membrane as a helical span at residues 60–87; it reads EVETIWTILPAMILILIALPSLRILYMM. Over 88–227 the chain is Mitochondrial intermembrane; the sequence is DEINDPSLTV…YFEDWSASLL (140 aa). Cu cation contacts are provided by histidine 161, cysteine 196, glutamate 198, cysteine 200, histidine 204, and methionine 207. Glutamate 198 provides a ligand contact to Mg(2+).

Belongs to the cytochrome c oxidase subunit 2 family. Component of the cytochrome c oxidase (complex IV, CIV), a multisubunit enzyme composed of 14 subunits. The complex is composed of a catalytic core of 3 subunits MT-CO1, MT-CO2 and MT-CO3, encoded in the mitochondrial DNA, and 11 supernumerary subunits COX4I, COX5A, COX5B, COX6A, COX6B, COX6C, COX7A, COX7B, COX7C, COX8 and NDUFA4, which are encoded in the nuclear genome. The complex exists as a monomer or a dimer and forms supercomplexes (SCs) in the inner mitochondrial membrane with NADH-ubiquinone oxidoreductase (complex I, CI) and ubiquinol-cytochrome c oxidoreductase (cytochrome b-c1 complex, complex III, CIII), resulting in different assemblies (supercomplex SCI(1)III(2)IV(1) and megacomplex MCI(2)III(2)IV(2)). Found in a complex with TMEM177, COA6, COX18, COX20, SCO1 and SCO2. Interacts with TMEM177 in a COX20-dependent manner. Interacts with COX20. Interacts with COX16. Cu cation is required as a cofactor.

The protein resides in the mitochondrion inner membrane. It carries out the reaction 4 Fe(II)-[cytochrome c] + O2 + 8 H(+)(in) = 4 Fe(III)-[cytochrome c] + 2 H2O + 4 H(+)(out). Its function is as follows. Component of the cytochrome c oxidase, the last enzyme in the mitochondrial electron transport chain which drives oxidative phosphorylation. The respiratory chain contains 3 multisubunit complexes succinate dehydrogenase (complex II, CII), ubiquinol-cytochrome c oxidoreductase (cytochrome b-c1 complex, complex III, CIII) and cytochrome c oxidase (complex IV, CIV), that cooperate to transfer electrons derived from NADH and succinate to molecular oxygen, creating an electrochemical gradient over the inner membrane that drives transmembrane transport and the ATP synthase. Cytochrome c oxidase is the component of the respiratory chain that catalyzes the reduction of oxygen to water. Electrons originating from reduced cytochrome c in the intermembrane space (IMS) are transferred via the dinuclear copper A center (CU(A)) of subunit 2 and heme A of subunit 1 to the active site in subunit 1, a binuclear center (BNC) formed by heme A3 and copper B (CU(B)). The BNC reduces molecular oxygen to 2 water molecules using 4 electrons from cytochrome c in the IMS and 4 protons from the mitochondrial matrix. The polypeptide is Cytochrome c oxidase subunit 2 (MT-CO2) (Dugong dugon (Dugong)).